A 90-amino-acid polypeptide reads, in one-letter code: N(2)-fixation sustaining protein CowN (90 aa).

It belongs to the CowN family.

Its function is as follows. Is required to sustain N(2)-dependent growth in the presence of low levels of carbon monoxide (CO). Probably acts by protecting the N(2) fixation ability of the nitrogenase complex, which is inactivated in the presence of CO. In Methylocella silvestris (strain DSM 15510 / CIP 108128 / LMG 27833 / NCIMB 13906 / BL2), this protein is N(2)-fixation sustaining protein CowN.